The primary structure comprises 76 residues: MRTFALLTAMLLLVALHAQAEARQARADEAAAQQQPGADDQGMAHSFTRPENAALPLSESARGLRCLCRRGVCQLL.

A signal peptide spans 1 to 22; sequence MRTFALLTAMLLLVALHAQAEA. Positions 23-64 are excised as a propeptide; sequence RQARADEAAAQQQPGADDQGMAHSFTRPENAALPLSESARGL. Residues 25–54 are disordered; sequence ARADEAAAQQQPGADDQGMAHSFTRPENAA. Low complexity predominate over residues 30 to 44; it reads AAAQQQPGADDQGMA. Residue R65 forms a Cyclopeptide (Arg-Cys) (interchain with C-73 in subunit A); in form RTD-1 linkage. A Cyclopeptide (Arg-Cys) (interchain with C-73 in subunit B); in form RTD-2 cross-link involves residue R65. C68 and C73 are joined by a disulfide. A Cyclopeptide (Cys-Arg) (interchain with R-65 in subunit A); in form RTD-1 cross-link involves residue C73. C73 participates in a covalent cross-link: Cyclopeptide (Cys-Arg) (interchain with R-65 in subunit B); in form RTD-2. The propeptide occupies 74–76; it reads QLL.

Belongs to the alpha-defensin family. Theta subfamily. In terms of assembly, RTD-1 is a cyclic heterodimer composed of subunits A and B; disulfide-linked. RTD-2 is a cyclic homodimer composed of two subunits B; disulfide-linked. In terms of processing, forms a cyclic peptide with 1 subunit B (RTD-2) or with 1 subunit A (RTD-1). An additional intersubunit disulfide bond is formed. RTD-1 is expressed in bone marrow. Detected in promyelocytes, myelocytes and mature neutrophils and monocytes.

In terms of biological role, RTD-1 and RTD-2 have similar antimicrobial activities against the Gram-positive bacteria S.aureus 502A and L.monocytogenes, the Gram-negative bacterium S.typhimurium, and the fungi C.albicans 16820 and C.neoformans 271A. RTD-2 is 2-3-fold less active than RTD-1 against E.coli ML35. This Macaca mulatta (Rhesus macaque) protein is Rhesus theta defensin-1/2 subunit B (RTD1B).